The primary structure comprises 584 residues: Phenylalanine--tRNA ligase beta subunit (584 aa).

One can recognise a B5 domain in the interval 290-369 (FSVRTKTVTH…RALGFNSLEP (80 aa)). Asp-347, Asp-353, Asp-356, and Asp-357 together coordinate Mg(2+).

It belongs to the phenylalanyl-tRNA synthetase beta subunit family. Type 2 subfamily. Tetramer of two alpha and two beta subunits. The cofactor is Mg(2+).

The protein localises to the cytoplasm. The catalysed reaction is tRNA(Phe) + L-phenylalanine + ATP = L-phenylalanyl-tRNA(Phe) + AMP + diphosphate + H(+). This Haloarcula marismortui (strain ATCC 43049 / DSM 3752 / JCM 8966 / VKM B-1809) (Halobacterium marismortui) protein is Phenylalanine--tRNA ligase beta subunit.